Reading from the N-terminus, the 460-residue chain is ATP synthase subunit beta (460 aa).

150 to 157 contributes to the ATP binding site; that stretch reads GGAGVGKT.

This sequence belongs to the ATPase alpha/beta chains family. F-type ATPases have 2 components, CF(1) - the catalytic core - and CF(0) - the membrane proton channel. CF(1) has five subunits: alpha(3), beta(3), gamma(1), delta(1), epsilon(1). CF(0) has three main subunits: a(1), b(2) and c(9-12). The alpha and beta chains form an alternating ring which encloses part of the gamma chain. CF(1) is attached to CF(0) by a central stalk formed by the gamma and epsilon chains, while a peripheral stalk is formed by the delta and b chains.

It is found in the cell inner membrane. The catalysed reaction is ATP + H2O + 4 H(+)(in) = ADP + phosphate + 5 H(+)(out). Its function is as follows. Produces ATP from ADP in the presence of a proton gradient across the membrane. The catalytic sites are hosted primarily by the beta subunits. The polypeptide is ATP synthase subunit beta (Serratia proteamaculans (strain 568)).